The primary structure comprises 2776 residues: A-kinase anchor protein 13 (2776 aa).

Disordered stretches follow at residues 371-401, 452-518, 547-584, 618-641, 653-689, 760-871, 910-951, 995-1029, 1431-1508, 1527-1546, and 1565-1603; these read KNKD…SCLQ, EPDA…TETT, PAEA…QSSP, TMPG…PAQS, EAGT…ESTM, VSQT…SPTA, ALGQ…IPGL, GAAK…LPSG, LCDT…MDSI, PFRR…AEMN, and RRSF…FGGE. Over residues 389 to 401 the composition is skewed to polar residues; it reads DSGSASHQDSCLQ. Positions 493-515 are important for interaction with PRKAR2A; the sequence is QNNKPQVGEGTKERLENSDSSTT. Basic and acidic residues predominate over residues 560–573; it reads PTEKPGMETQERGC. Over residues 659–672 the composition is skewed to polar residues; it reads AEATHQPSTVTSSG. Over residues 773 to 788 the composition is skewed to low complexity; it reads SPPASSFSLASSPESE. S784 bears the Phosphoserine mark. T809 is modified (phosphothreonine). Composition is skewed to basic and acidic residues over residues 820–834 and 914–940; these read DGPD…DKVG and DGKD…EDQR. Position 941 is a phosphothreonine (T941). The segment covering 1005-1020 has biased composition (polar residues); the sequence is TSLSADSKQKASSTEQ. Low complexity predominate over residues 1433 to 1444; the sequence is DTTGSSSSTDDT. Positions 1454 to 1476 are enriched in polar residues; it reads GSDVSLPQTSKLNRSRNHQSANG. Phosphoserine is present on residues S1455, S1473, S1507, S1532, and S1569. The interval 1552–1678 is important for interaction with MAP2K3; the sequence is RALGHVVRRP…SRPFHSTSAN (127 aa). The span at 1583-1594 shows a compositional bias: low complexity; it reads SSSLEMSSANSS. S1608, S1611, and S1613 each carry phosphoserine. K1637 bears the N6-methyllysine mark. The disordered stretch occupies residues 1711-1756; that stretch reads TFSYIRNKMSSSKKSKEKEKEKDKIKEKEKDSKEKEKDKKTLNGHT. Residues 1724–1751 show a composition bias toward basic and acidic residues; the sequence is KSKEKEKEKDKIKEKEKDSKEKEKDKKT. The Phorbol-ester/DAG-type zinc finger occupies 1754 to 1801; it reads GHTFSPIPIVGPISCSQCMKPFTNKDAYTCAGCGAFVHKGCRENLASC. 3 positions are modified to phosphoserine: S1839, S1858, and S1892. Positions 1882 to 2776 are interaction with ESR1; the sequence is MSNTWKFLSH…VPAEGEEIFC (895 aa). T1893 is modified (phosphothreonine). A phosphoserine mark is found at S1895 and S1908. Residues 1957-2154 form the DH domain; that stretch reads KRQEVIYELM…KDVIGAVDSK (198 aa). A PH domain is found at 2194–2296; it reads KLVRDGSVFL…WIQIIQDTIN (103 aa). Residues S2308 and S2361 each carry the phosphoserine modification. Positions 2308–2345 form a coiled coil; that stretch reads SENEEEKKLLDTKARELKEQLQQKDQQILLLLEEKEMI. T2431 is subject to Phosphothreonine. The tract at residues 2436-2471 is disordered; sequence DCHQMNASKGGEKEEGDDGQDLRRTESDSGLKKGGN. Positions 2455–2466 are enriched in basic and acidic residues; the sequence is QDLRRTESDSGL. Phosphoserine is present on residues S2527 and S2530. Positions 2532–2646 form a coiled coil; sequence LIEQEKQRSL…ERLSQRQMDQ (115 aa). Disordered regions lie at residues 2549 to 2605 and 2626 to 2776; these read ANLQ…EELQ and EREQ…EIFC. Composition is skewed to basic and acidic residues over residues 2558–2605 and 2626–2640; these read HLEE…EELQ and EREQ…ERLS. 3 stretches are compositionally biased toward polar residues: residues 2641 to 2653, 2665 to 2700, and 2713 to 2727; these read QRQM…QVSN, LPNS…SISR, and SASQ…SQAP. Residues S2673 and S2692 each carry the phosphoserine modification.

In terms of assembly, interacts with the cAMP-dependent protein kinase (PKA) holoenzyme and with the regulatory subunit PRKAR2A. Interacts with RHOA. Also interacts with RHOB and RHOC. Identified in a ternary complex with RHOA and PRKAR2A. Identified in a complex with NR3C1 and RHOA. Interacts with BRAF and KSR1. Identified in a complex with BRAF and KSR1. Component of a signaling complex containing at least AKAP13, PKN1, MAPK14, ZAK and MAP2K3. Within this complex, AKAP13 interacts directly with PKN1, which in turn recruits MAPK14, MAP2K3 and ZAK. Interacts (phosphorylated form) with YWHAB and YWHAZ. Interaction with YWHAB inhibits activation of RHOA, interferes with PKN1 binding and activation of MAP kinases. Interacts with GNA12. Interacts with IKBKB. Interacts with ESR1, THRA, PPARA and NME2. Interacts (via the C-terminal domain after the PH domain) with MEF2C and RXRB. Interacts (via the C-terminal domain after the PH domain) with PRKD1. Detected in embryonic heart, limb bud, first branchial arch and forebrain (at protein level). Detected in heart. Detected in perichondrium, but not in the bone growth plate.

The protein localises to the cytoplasm. Its subcellular location is the cytosol. It localises to the cell cortex. The protein resides in the cytoskeleton. It is found in the nucleus. The protein localises to the membrane. In terms of biological role, scaffold protein that plays an important role in assembling signaling complexes downstream of several types of G protein-coupled receptors. Activates RHOA in response to signaling via G protein-coupled receptors via its function as Rho guanine nucleotide exchange factor. May also activate other Rho family members. Part of a kinase signaling complex that links ADRA1A and ADRA1B adrenergic receptor signaling to the activation of downstream p38 MAP kinases, such as MAPK11 and MAPK14. Part of a signaling complex that links ADRA1B signaling to the activation of RHOA and IKBKB/IKKB, leading to increased NF-kappa-B transcriptional activity. Part of a RHOA-dependent signaling cascade that mediates responses to lysophosphatidic acid (LPA), a signaling molecule that activates G-protein coupled receptors and potentiates transcriptional activation of the glucocorticoid receptor NR3C1. Part of a signaling cascade that stimulates MEF2C-dependent gene expression in response to lysophosphatidic acid (LPA). Part of a signaling pathway that activates MAPK11 and/or MAPK14 and leads to increased transcription activation of the estrogen receptors ESR1 and ESR2. Part of a signaling cascade that links cAMP and EGFR signaling to BRAF signaling and to PKA-mediated phosphorylation of KSR1, leading to the activation of downstream MAP kinases, such as MAPK1 or MAPK3. Functions as a scaffold protein that anchors cAMP-dependent protein kinase (PKA) and PRKD1. This promotes activation of PRKD1, leading to increased phosphorylation of HDAC5 and ultimately cardiomyocyte hypertrophy. Has no guanine nucleotide exchange activity on CDC42, Ras or Rac. Required for normal embryonic heart development, and in particular for normal sarcomere formation in the developing cardiomyocytes. Plays a role in cardiomyocyte growth and cardiac hypertrophy in response to activation of the beta-adrenergic receptor by phenylephrine or isoproterenol. Required for normal adaptive cardiac hypertrophy in response to pressure overload. Plays a role in osteogenesis. This chain is A-kinase anchor protein 13, found in Mus musculus (Mouse).